The primary structure comprises 182 residues: Kappa-casein (182 aa).

The signal sequence occupies residues methionine 1–valine 20. O-linked (GalNAc...) threonine glycosylation is found at threonine 133, threonine 143, threonine 148, and threonine 151. At threonine 157 the chain carries Phosphothreonine; alternate. A glycan (O-linked (GalNAc...) threonine; alternate) is linked at threonine 157. 3 O-linked (GalNAc...) threonine glycosylation sites follow: threonine 167, threonine 169, and threonine 178.

Belongs to the kappa-casein family. Heteromultimers composed of alpha-s1 casein and kappa casein linked by disulfide bonds. In terms of processing, the N-terminus is blocked. In terms of tissue distribution, mammary gland specific. Secreted in milk.

Its subcellular location is the secreted. Its function is as follows. Kappa-casein stabilizes micelle formation, preventing casein precipitation in milk. In Homo sapiens (Human), this protein is Kappa-casein (CSN3).